The following is a 419-amino-acid chain: G protein-activated inward rectifier potassium channel 4 (419 aa).

Residues 1 to 86 (MAGDSRNAMN…LFTTLVDLKW (86 aa)) are Cytoplasmic-facing. A Phosphoserine modification is found at serine 5. Residues 87–111 (RFNLLVFTMVYTITWLFFGFIWWLI) traverse the membrane as a helical segment. Residues 112-135 (AYVRGDLDHVGDQEWIPCVENLSG) are Extracellular-facing. The helical; Pore-forming intramembrane region spans 136–147 (FVSAFLFSIETE). The segment at residues 148–154 (TTIGYGF) is an intramembrane region (pore-forming). Residues 149 to 154 (TIGYGF) carry the Selectivity filter motif. The Extracellular segment spans residues 155-163 (RVITEKCPE). A helical transmembrane segment spans residues 164–185 (GIILLLVQAILGSIVNAFMVGC). Residues 186–419 (MFVKISQPKK…SVSRATRGSM (234 aa)) are Cytoplasmic-facing. Positions 380–390 (LPSPPLLGGCA) are enriched in low complexity. The segment at 380–419 (LPSPPLLGGCAEAEKEAEAEHDEEEEPNGLSVSRATRGSM) is disordered. A compositionally biased stretch (polar residues) spans 409–419 (LSVSRATRGSM).

This sequence belongs to the inward rectifier-type potassium channel (TC 1.A.2.1) family. KCNJ5 subfamily. As to quaternary structure, associates with KCNJ3/GIRK1 or KCNJ6/GRIK2 to form a G-protein-activated heteromultimer pore-forming unit. The resulting inward current is much larger. Most abundant in heart tissue where it is found predominantly in atria. Also found in brain, kidney, liver, spleen, lung and thymus.

It localises to the membrane. It carries out the reaction K(+)(in) = K(+)(out). Its activity is regulated as follows. Heteromultimer composed of KCNJ3/GIRK1 and KCNJ5/GIRK4 is activated by phosphatidylinositol 4,5 biphosphate (PtdIns(4,5)P2). Inward rectifier potassium channels are characterized by a greater tendency to allow potassium to flow into the cell rather than out of it. Their voltage dependence is regulated by the concentration of extracellular potassium; as external potassium is raised, the voltage range of the channel opening shifts to more positive voltages. The inward rectification is mainly due to the blockage of outward current by internal magnesium. Can be blocked by external barium. This potassium channel is controlled by G proteins. The protein is G protein-activated inward rectifier potassium channel 4 (Kcnj5) of Rattus norvegicus (Rat).